The primary structure comprises 371 residues: Chaperone protein DnaJ (371 aa).

The 65-residue stretch at 5–69 (DYYEVLGLSK…QKRAQYDQFG (65 aa)) folds into the J domain. The CR-type zinc finger occupies 133–215 (GKELNVEIPV…CHGSGKVRKR (83 aa)). Zn(2+) is bound by residues Cys-146, Cys-149, Cys-163, Cys-166, Cys-189, Cys-192, Cys-203, and Cys-206. 4 CXXCXGXG motif repeats span residues 146 to 153 (CDTCKGSG), 163 to 170 (CKHCSGSG), 189 to 196 (CSHCSGTG), and 203 to 210 (CTTCHGSG).

The protein belongs to the DnaJ family. Homodimer. Zn(2+) serves as cofactor.

It localises to the cytoplasm. Functionally, participates actively in the response to hyperosmotic and heat shock by preventing the aggregation of stress-denatured proteins and by disaggregating proteins, also in an autonomous, DnaK-independent fashion. Unfolded proteins bind initially to DnaJ; upon interaction with the DnaJ-bound protein, DnaK hydrolyzes its bound ATP, resulting in the formation of a stable complex. GrpE releases ADP from DnaK; ATP binding to DnaK triggers the release of the substrate protein, thus completing the reaction cycle. Several rounds of ATP-dependent interactions between DnaJ, DnaK and GrpE are required for fully efficient folding. Also involved, together with DnaK and GrpE, in the DNA replication of plasmids through activation of initiation proteins. This chain is Chaperone protein DnaJ, found in Bacillus anthracis (strain A0248).